We begin with the raw amino-acid sequence, 622 residues long: Chaperone protein HscA homolog (622 aa).

It belongs to the heat shock protein 70 family.

In terms of biological role, chaperone involved in the maturation of iron-sulfur cluster-containing proteins. Has a low intrinsic ATPase activity which is markedly stimulated by HscB. The protein is Chaperone protein HscA homolog of Pseudoalteromonas atlantica (strain T6c / ATCC BAA-1087).